A 293-amino-acid polypeptide reads, in one-letter code: 4-diphosphocytidyl-2-C-methyl-D-erythritol kinase (293 aa).

The active site involves lysine 16. An ATP-binding site is contributed by 99–109 (PMGAGLGGGSS). Aspartate 141 is a catalytic residue.

Belongs to the GHMP kinase family. IspE subfamily.

It carries out the reaction 4-CDP-2-C-methyl-D-erythritol + ATP = 4-CDP-2-C-methyl-D-erythritol 2-phosphate + ADP + H(+). The protein operates within isoprenoid biosynthesis; isopentenyl diphosphate biosynthesis via DXP pathway; isopentenyl diphosphate from 1-deoxy-D-xylulose 5-phosphate: step 3/6. In terms of biological role, catalyzes the phosphorylation of the position 2 hydroxy group of 4-diphosphocytidyl-2C-methyl-D-erythritol. This chain is 4-diphosphocytidyl-2-C-methyl-D-erythritol kinase, found in Paraburkholderia phytofirmans (strain DSM 17436 / LMG 22146 / PsJN) (Burkholderia phytofirmans).